We begin with the raw amino-acid sequence, 349 residues long: Isopentenyl-diphosphate delta-isomerase (349 aa).

Position 6-7 (6-7) interacts with substrate; it reads RK. FMN contacts are provided by residues 62–64, Ser93, and Asn122; that span reads AMT. Gln152 lines the substrate pocket. A Mg(2+)-binding site is contributed by Glu153. FMN contacts are provided by residues Lys184, Thr214, 259–261, and 280–281; these read GVR and AG.

This sequence belongs to the IPP isomerase type 2 family. In terms of assembly, homooctamer. Dimer of tetramers. Requires FMN as cofactor. It depends on NADPH as a cofactor. The cofactor is Mg(2+).

The protein localises to the cytoplasm. The catalysed reaction is isopentenyl diphosphate = dimethylallyl diphosphate. In terms of biological role, involved in the biosynthesis of isoprenoids. Catalyzes the 1,3-allylic rearrangement of the homoallylic substrate isopentenyl (IPP) to its allylic isomer, dimethylallyl diphosphate (DMAPP). The sequence is that of Isopentenyl-diphosphate delta-isomerase from Geobacillus sp. (strain WCH70).